A 263-amino-acid chain; its full sequence is 7beta-hydroxysteroid dehydrogenase (263 aa).

Residues 17-21 (TEGVG), 40-41 (RR), and 66-67 (DF) contribute to the NADP(+) site. Y156 acts as the Proton acceptor in catalysis. S240 is an NADP(+) binding site.

Belongs to the short-chain dehydrogenases/reductases (SDR) family.

It catalyses the reaction a 7beta-hydroxysteroid + NADP(+) = a 7-oxosteroid + NADPH + H(+). The catalysed reaction is 7-oxolithocholate + NADPH + H(+) = ursodeoxycholate + NADP(+). Its function is as follows. 7beta-hydroxysteroid dehydrogenase that catalyzes the reduction of the 7-oxo group of 7-oxo-lithocholate (7-oxo-LCA), to yield ursodeoxycholate (UDCA). As R.gnavus is a common core bacterium of the human gut microbiota, this enzyme contributes to the formation of UDCA in the human colon. UDCA is regarded as a chemopreventive beneficial secondary bile acid due to its low hydrophobicity; it protects hepatocytes and bile duct epithelial cells against necrosis and apoptosis induced by more hydrophobic secondary bile acids like deoxycholate (DCA). This enzyme is also able to catalyze the reverse reaction in vitro, i.e. the oxidation of the 7beta-hydroxy group of UDCA to 7-oxo-LCA, but much less efficiently than the reduction reaction. The chain is 7beta-hydroxysteroid dehydrogenase from Mediterraneibacter gnavus (strain ATCC 29149 / DSM 114966 / JCM 6515 / VPI C7-9) (Ruminococcus gnavus).